Consider the following 872-residue polypeptide: Metabotropic glutamate receptor 2 (872 aa).

Residues 1–18 (MGSLLALLALLLLWGAVA) form the signal peptide. Topologically, residues 19–567 (EGPAKKVLTL…QEYIRWGDAW (549 aa)) are extracellular. Cysteine 50 and cysteine 92 are disulfide-bonded. 5 residues coordinate L-glutamate: arginine 57, arginine 61, serine 145, alanine 166, and threonine 168. N-linked (GlcNAc...) asparagine glycosylation is found at asparagine 203 and asparagine 286. Disulfide bonds link cysteine 234/cysteine 518, cysteine 355/cysteine 362, cysteine 400/cysteine 407, cysteine 500/cysteine 519, cysteine 504/cysteine 522, cysteine 525/cysteine 537, and cysteine 540/cysteine 553. Residue aspartate 295 participates in L-glutamate binding. The N-linked (GlcNAc...) asparagine glycan is linked to asparagine 338. Lysine 377 serves as a coordination point for L-glutamate. Asparagine 402 is a glycosylation site (N-linked (GlcNAc...) asparagine). Residue asparagine 547 is glycosylated (N-linked (GlcNAc...) asparagine). A helical transmembrane segment spans residues 568 to 590 (AVGPVTIACLGALATLFVLGVFV). The Cytoplasmic segment spans residues 591–604 (RHNATPVVKASGRE). A helical transmembrane segment spans residues 605–625 (LCYILLGGVFLCYCMTFIFIA). Residues 626-636 (KPSTAVCTLRR) lie on the Extracellular side of the membrane. Cysteine 632 and cysteine 721 are joined by a disulfide. Residues 637–655 (LGLGTAFSVCYSALLTKTN) form a helical membrane-spanning segment. The Cytoplasmic segment spans residues 656–679 (RIARIFGGAREGAQRPRFISPASQ). An important for interaction with HTR2A region spans residues 677 to 685 (ASQVAICLA). Residues 680-700 (VAICLALISGQLLIVVAWLVV) traverse the membrane as a helical segment. Over 701-725 (EAPGTGKETAPERREVVTLRCNHRD) the chain is Extracellular. A helical membrane pass occupies residues 726–747 (ASMLGSLAYNVLLIALCTLYAF). Residues 748-760 (KTRKCPENFNEAK) are Cytoplasmic-facing. The chain crosses the membrane as a helical span at residues 761 to 783 (FIGFTMYTTCIIWLAFLPIFYVT). Residues 784–793 (SSDYRVQTTT) lie on the Extracellular side of the membrane. The helical transmembrane segment at 794–819 (MCVSVSLSGSVVLGCLFAPKLHIILF) threads the bilayer. The Cytoplasmic portion of the chain corresponds to 820-872 (QPQKNVVSHRAPTSRFGSAAARASSSLGQGSGSQFVPTVCNGREVVDSTTSSL).

Belongs to the G-protein coupled receptor 3 family. Forms heterodimers with GRM3 or GRM4. Interacts with TAMALIN. Interacts with HTR2A. In terms of assembly, (Microbial infection) Interacts with H5N6 virus protein HA. As to quaternary structure, (Microbial infection) Interacts with rabies virus protein G. (Microbial infection) Interacts with SARS-CoV-2 virus spike protein S. Detected in brain cortex (at protein level). Widely expressed in different regions of the adult brain as well as in fetal brain.

It localises to the cell membrane. It is found in the synapse. The protein resides in the cell projection. Its subcellular location is the dendrite. Its function is as follows. Dimeric G protein-coupled receptor which is activated by the excitatory neurotransmitter L-glutamate. Plays critical roles in modulating synaptic transmission and neuronal excitability. Upon activation by glutamate, inhibits presynaptic calcium channels, reducing further glutamate release and dampening excitatory signaling. Mechanistically, ligand binding causes a conformation change that triggers signaling via guanine nucleotide-binding proteins (G proteins) and modulates the activity of down-stream effectors, such as adenylate cyclase. May mediate suppression of neurotransmission or may be involved in synaptogenesis or synaptic stabilization. Functionally, (Microbial infection) Plays an important role in influenza virus internalization. In terms of biological role, (Microbial infection) Acts as a host entry factor for rabies virus that hijacks the endocytosis of GRM2 to enter cells. (Microbial infection) Acts as a host entry factor for SARS-CoV-2 that hijacks the endocytosis of GRM2 to enter cells. This chain is Metabotropic glutamate receptor 2, found in Homo sapiens (Human).